Here is a 531-residue protein sequence, read N- to C-terminus: Peptide chain release factor 3 (531 aa).

Residues R10–K278 form the tr-type G domain. Residues S19 to T26, D87 to H91, and N141 to D144 contribute to the GTP site.

Belongs to the TRAFAC class translation factor GTPase superfamily. Classic translation factor GTPase family. PrfC subfamily.

The protein localises to the cytoplasm. Increases the formation of ribosomal termination complexes and stimulates activities of RF-1 and RF-2. It binds guanine nucleotides and has strong preference for UGA stop codons. It may interact directly with the ribosome. The stimulation of RF-1 and RF-2 is significantly reduced by GTP and GDP, but not by GMP. The sequence is that of Peptide chain release factor 3 from Neisseria meningitidis serogroup C / serotype 2a (strain ATCC 700532 / DSM 15464 / FAM18).